A 238-amino-acid polypeptide reads, in one-letter code: Ribonuclease PH (238 aa).

Phosphate-binding positions include arginine 86 and 124–126 (GTR).

This sequence belongs to the RNase PH family. In terms of assembly, homohexameric ring arranged as a trimer of dimers.

It carries out the reaction tRNA(n+1) + phosphate = tRNA(n) + a ribonucleoside 5'-diphosphate. Functionally, phosphorolytic 3'-5' exoribonuclease that plays an important role in tRNA 3'-end maturation. Removes nucleotide residues following the 3'-CCA terminus of tRNAs; can also add nucleotides to the ends of RNA molecules by using nucleoside diphosphates as substrates, but this may not be physiologically important. Probably plays a role in initiation of 16S rRNA degradation (leading to ribosome degradation) during starvation. In Enterobacter sp. (strain 638), this protein is Ribonuclease PH.